The chain runs to 166 residues: Co-chaperone protein HscB homolog (166 aa).

Positions 3–75 (QYFTLFRIEP…IDRAAYLLKT (73 aa)) constitute a J domain.

The protein belongs to the HscB family. In terms of assembly, interacts with HscA and stimulates its ATPase activity.

Its function is as follows. Co-chaperone involved in the maturation of iron-sulfur cluster-containing proteins. Seems to help targeting proteins to be folded toward HscA. The chain is Co-chaperone protein HscB homolog from Neisseria gonorrhoeae (strain NCCP11945).